The chain runs to 107 residues: Large ribosomal subunit protein uL24 (107 aa).

It belongs to the universal ribosomal protein uL24 family. As to quaternary structure, part of the 50S ribosomal subunit.

Functionally, one of two assembly initiator proteins, it binds directly to the 5'-end of the 23S rRNA, where it nucleates assembly of the 50S subunit. Its function is as follows. One of the proteins that surrounds the polypeptide exit tunnel on the outside of the subunit. This Mycobacterium ulcerans (strain Agy99) protein is Large ribosomal subunit protein uL24.